Reading from the N-terminus, the 363-residue chain is Putative agmatine deiminase 1 (363 aa).

The Amidino-cysteine intermediate role is filled by C356.

The protein belongs to the agmatine deiminase family.

It carries out the reaction agmatine + H2O = N-carbamoylputrescine + NH4(+). The chain is Putative agmatine deiminase 1 from Listeria monocytogenes serovar 1/2a (strain ATCC BAA-679 / EGD-e).